Here is a 663-residue protein sequence, read N- to C-terminus: Endopolyphosphatase (663 aa).

Residues 1 to 14 (MAVNEKDVGRKSRV) are Cytoplasmic-facing. Residues 15–35 (SVVLWVFIALGTLFLCKNAFT) form a helical; Signal-anchor for type II membrane protein membrane-spanning segment. The Vacuolar segment spans residues 36-663 (FSSESIHGLK…ISTGYEDERN (628 aa)). Residues N487 and N526 are each glycosylated (N-linked (GlcNAc...) asparagine). The tract at residues 534–564 (SAEQNKKKKKKNGKPDKSIPRKKPDELPAGP) is disordered. Residues 546-559 (GKPDKSIPRKKPDE) show a composition bias toward basic and acidic residues.

Belongs to the endopolyphosphatase PPN1 family. The cofactor is a divalent metal cation. Processing by proteases in the vacuole may be required for activation.

The protein resides in the vacuole membrane. It catalyses the reaction [phosphate](n+1) + n H2O = (n+1) phosphate + n H(+). In terms of biological role, catalyzes the hydrolysis of inorganic polyphosphate (polyP) chains of many hundreds of phosphate residues into shorter lengths. This chain is Endopolyphosphatase (PPN1), found in Candida glabrata (strain ATCC 2001 / BCRC 20586 / JCM 3761 / NBRC 0622 / NRRL Y-65 / CBS 138) (Yeast).